A 3584-amino-acid polypeptide reads, in one-letter code: D-lysergyl-peptide-synthetase subunit 1 (3584 aa).

Positions I25–A44 are disordered. A compositionally biased stretch (basic and acidic residues) spans N29–T39. The interval S307–I706 is adenylation (A) domain 1. Residues R848–T917 enclose the Carrier 1 domain. O-(pantetheine 4'-phosphoryl)serine is present on S880. The interval E962 to N1353 is condensation (C) domain 1. Positions Q1396–R1803 are adenylation (A) domain 2. One can recognise a Carrier 2 domain in the interval T1948–G2016. An O-(pantetheine 4'-phosphoryl)serine modification is found at S1980. The segment at E2066 to M2483 is condensation (C) domain 2. Positions Q2508 to R2906 are adenylation (A) domain 3. One can recognise a Carrier 3 domain in the interval M3041–E3109. An O-(pantetheine 4'-phosphoryl)serine modification is found at S3073. The interval L3174–D3472 is cyclization (Cyc) domain.

The protein belongs to the NRP synthetase family.

The protein operates within alkaloid biosynthesis; ergot alkaloid biosynthesis. Its function is as follows. D-lysergyl-peptide-synthetase subunit 1; part of the gene cluster that mediates the biosynthesis of fungal ergot alkaloid. DmaW catalyzes the first step of ergot alkaloid biosynthesis by condensing dimethylallyl diphosphate (DMAP) and tryptophan to form 4-dimethylallyl-L-tryptophan. The second step is catalyzed by the methyltransferase easF that methylates 4-dimethylallyl-L-tryptophan in the presence of S-adenosyl-L-methionine, resulting in the formation of 4-dimethylallyl-L-abrine. The catalase easC and the FAD-dependent oxidoreductase easE then transform 4-dimethylallyl-L-abrine to chanoclavine-I which is further oxidized by easD in the presence of NAD(+), resulting in the formation of chanoclavine-I aldehyde. Agroclavine dehydrogenase easG then mediates the conversion of chanoclavine-I aldehyde to agroclavine via a non-enzymatic adduct reaction: the substrate is an iminium intermediate that is formed spontaneously from chanoclavine-I aldehyde in the presence of glutathione. The presence of easA is not required to complete this reaction. Further conversion of agroclavine to paspalic acid is a two-step process involving oxidation of agroclavine to elymoclavine and of elymoclavine to paspalic acid, the second step being performed by the elymoclavine oxidase cloA. Paspalic acid is then further converted to D-lysergic acid. Ergopeptines are assembled from D-lysergic acid and three different amino acids by the D-lysergyl-peptide-synthetases composed each of a monomudular and a trimodular nonribosomal peptide synthetase subunit. LpsB and lpsC encode the monomodular subunits responsible for D-lysergic acid activation and incorporation into the ergopeptine backbone. LpsA1 and A2 subunits encode the trimodular nonribosomal peptide synthetase assembling the tripeptide portion of ergopeptines. LpsA1 is responsible for formation of the major ergopeptine, ergotamine, and lpsA2 for alpha-ergocryptine, the minor ergopeptine of the total alkaloid mixture elaborated by C.purpurea. D-lysergyl-tripeptides are assembled by the nonribosomal peptide synthetases and released as N-(D-lysergyl-aminoacyl)-lactams. Cyclolization of the D-lysergyl-tripeptides is performed by the Fe(2+)/2-ketoglutarate-dependent dioxygenase easH which introduces a hydroxyl group into N-(D-lysergyl-aminoacyl)-lactam at alpha-C of the aminoacyl residue followed by spontaneous condensation with the terminal lactam carbonyl group. This chain is D-lysergyl-peptide-synthetase subunit 1, found in Claviceps purpurea (strain 20.1) (Ergot fungus).